A 360-amino-acid chain; its full sequence is UDP-N-acetylglucosamine--N-acetylmuramyl-(pentapeptide) pyrophosphoryl-undecaprenol N-acetylglucosamine transferase (360 aa).

UDP-N-acetyl-alpha-D-glucosamine contacts are provided by residues 12–14 (TAG), serine 198, and glutamine 289.

The protein belongs to the glycosyltransferase 28 family. MurG subfamily.

It localises to the cell membrane. It carries out the reaction Mur2Ac(oyl-L-Ala-gamma-D-Glu-L-Lys-D-Ala-D-Ala)-di-trans,octa-cis-undecaprenyl diphosphate + UDP-N-acetyl-alpha-D-glucosamine = beta-D-GlcNAc-(1-&gt;4)-Mur2Ac(oyl-L-Ala-gamma-D-Glu-L-Lys-D-Ala-D-Ala)-di-trans,octa-cis-undecaprenyl diphosphate + UDP + H(+). The protein operates within cell wall biogenesis; peptidoglycan biosynthesis. Functionally, cell wall formation. Catalyzes the transfer of a GlcNAc subunit on undecaprenyl-pyrophosphoryl-MurNAc-pentapeptide (lipid intermediate I) to form undecaprenyl-pyrophosphoryl-MurNAc-(pentapeptide)GlcNAc (lipid intermediate II). This chain is UDP-N-acetylglucosamine--N-acetylmuramyl-(pentapeptide) pyrophosphoryl-undecaprenol N-acetylglucosamine transferase, found in Streptococcus equi subsp. equi (strain 4047).